The sequence spans 189 residues: MVRKAAQEPKDDTLQMKVRQYVVSAARLPIEQGTKPEILQMRVFARDEVHAKTKFWYNMRKLNKIKRSQGRILSVNEIYEKSLNTVKTYGIVLKYQSRTAIHNMYKEYRDVSLNGAVSQLIQDMAGNHRAQPDTIQIIRTATLEPKDIKRPATLAMRNAALKFPIVKTIHRPSEKKYRTVYKATRPTTF.

This sequence belongs to the eukaryotic ribosomal protein eL20 family.

Its subcellular location is the cytoplasm. The chain is Large ribosomal subunit protein eL20 (RPL18A) from Tetrahymena thermophila.